The chain runs to 615 residues: uncharacterized protein (615 aa).

3 stretches are compositionally biased toward polar residues: residues 1 to 11 (MSETSSNSPAS), 41 to 55 (LSQN…SSKV), and 128 to 140 (TSGS…NAPP). Disordered regions lie at residues 1–61 (MSET…QALV) and 97–149 (HQNH…KASS). 2 positions are modified to phosphoserine: Ser-149 and Ser-152. A disordered region spans residues 181–217 (LIHPEQTDRGLPYAPDEKFHNSGSLKLPKGASLEDLS). 2 positions are modified to phosphoserine: Ser-219 and Ser-275. 3 disordered regions span residues 266-481 (KPLA…KFTG), 493-565 (RLQK…KPSF), and 586-615 (GVET…TEEQ). A compositionally biased stretch (polar residues) spans 272-283 (RQRSTADLTESD). A phosphothreonine mark is found at Thr-276 and Thr-297. Over residues 312-323 (EAEKGFYTKDGE) the composition is skewed to basic and acidic residues. Over residues 356-376 (PSLSSASQPSAASSSSSSEPS) the composition is skewed to low complexity. The segment covering 505–522 (PNKSKSPSGTKSPASGET) has biased composition (polar residues). Residue Thr-514 is modified to Phosphothreonine. The residue at position 516 (Ser-516) is a Phosphoserine. Residues 586-599 (GVETRKEVEPKEEA) are compositionally biased toward basic and acidic residues. Residues 600-615 (VIPEEDVEVEVETEEQ) show a composition bias toward acidic residues.

This is an uncharacterized protein from Schizosaccharomyces pombe (strain 972 / ATCC 24843) (Fission yeast).